Here is a 99-residue protein sequence, read N- to C-terminus: Aspartyl/glutamyl-tRNA(Asn/Gln) amidotransferase subunit C (99 aa).

The protein belongs to the GatC family. In terms of assembly, heterotrimer of A, B and C subunits.

It catalyses the reaction L-glutamyl-tRNA(Gln) + L-glutamine + ATP + H2O = L-glutaminyl-tRNA(Gln) + L-glutamate + ADP + phosphate + H(+). The catalysed reaction is L-aspartyl-tRNA(Asn) + L-glutamine + ATP + H2O = L-asparaginyl-tRNA(Asn) + L-glutamate + ADP + phosphate + 2 H(+). Allows the formation of correctly charged Asn-tRNA(Asn) or Gln-tRNA(Gln) through the transamidation of misacylated Asp-tRNA(Asn) or Glu-tRNA(Gln) in organisms which lack either or both of asparaginyl-tRNA or glutaminyl-tRNA synthetases. The reaction takes place in the presence of glutamine and ATP through an activated phospho-Asp-tRNA(Asn) or phospho-Glu-tRNA(Gln). In Paraburkholderia phytofirmans (strain DSM 17436 / LMG 22146 / PsJN) (Burkholderia phytofirmans), this protein is Aspartyl/glutamyl-tRNA(Asn/Gln) amidotransferase subunit C.